The sequence spans 959 residues: MEELVLPVISRQFDKKLLGRYEYVIELAKPEQDEWTNHDVTQIPGRRMFDVAQQGIRDAMHLKPLENDGEVLPRILDMSIACYDMRKTMMKKEGVDFVSNTRWLEWIIQDSMDVQPLRVHINEDHSTVQYDMFSAKVHIDSRKADTTSYHAIAVETKAERKCCHVRTEVWNSVVRNHLFNTAQESCYTFKQTYELIVNSERLSTEEEFRVGAPQFHTIQRNHRMQLGDNAYDKFLKGLVQLRVSGTTPAKIRDEVAALDVIRDNWIRGSFDRSHIKSLELCRLLSSIGRKMVNMEEEPKDEKDLSVKFQFRLDEKFSPNDPERNVIFTSKTHRTNEDRFYVLLVIAASDTNNGRVWWSNPYPCLRGALIAAECKLGDVYHTLRSKYAWGVRPTYKPKDLEREREKYVVGRVNLFDLEGEPATKVIHWEYELISPTYSVSNHKGNQCDLYPDDVEITTKFNEDRYREMIQSVIDDGWDQKNLKMYKILEEEGNPLLYDLEKDINLDSQSQVVFPSYYNKWTHAPMFNARVKPCDIELAERKNDDPFVKRTLKPIKADCVDLLRYHMSHYYDLRPCVKGVSLSIKQTPSGIHQALVQDDSYSRLLRRRDVDLDYSSPCPIITNYFLLEKFHILILTIMEKHYWELDDSDDVYEFPKIDASAFEVDGTLYDISQTIVHMYDRFFEKRRVLRSIDESRWILHLIRISQGRERLEVIERFFPNYGKAMRQRDFKKVRDVMFLNFLPFFFLTGDNISYEHRQWSIPIILYADKLRILPIEVGAHYNRFGVTCILELLNFFPSYEKREEKLEEDIVLCADAIVNFYLQTTISNGGVQTSIVSTKALLYEMYLSSICGGYSEGVLWYLPITHPVKCLVALEVSDALVGADVRIDKIKRRFPLSAKHLKGIVQISVHPNRTFSVTTCGIVKHKVCKKTLLKHRCDVILLQTPGYVFGNDELLTKLLNI.

It belongs to the orbivirus VP2 family.

It localises to the virion. Functionally, the VP2 protein is one of the two proteins (with VP5) which constitute the virus particle outer capsid. It is the major target of the host immunogenic response. Responsible for viral attachment to target host cell, probably by binding to sialic acid. This attachment induces virion internalization predominantly through clathrin-dependent endocytosis. The chain is Outer capsid protein VP2 (Segment-2) from Antilocapra americana (Pronghorn).